We begin with the raw amino-acid sequence, 72 residues long: KFIRHKDESFYECGQSIGYQQYCVDACQAHGSKEKGYCKAMAPFGLPGGCYCPKLPSNRVKMCFGALESKCA.

The region spanning 1-72 is the LCN-type CS-alpha/beta domain; sequence KFIRHKDESF…CFGALESKCA (72 aa). 4 cysteine pairs are disulfide-bonded: Cys-13–Cys-38, Cys-23–Cys-50, Cys-27–Cys-52, and Cys-63–Cys-71.

It belongs to the long (4 C-C) scorpion toxin superfamily. Sodium channel inhibitor family. In terms of tissue distribution, expressed by the venom gland.

It is found in the secreted. Its function is as follows. Sodium channel (Nav) specific neurotoxin. This Anuroctonus phaiodactylus (Mafia scorpion) protein is Phaiodotoxin-3.